Reading from the N-terminus, the 176-residue chain is Ribosome maturation factor RimM (176 aa).

Residues 97–176 enclose the PRC barrel domain; that stretch reads EDEFYWRDLI…QILVDWDPDF (80 aa).

The protein belongs to the RimM family. Binds ribosomal protein uS19.

The protein resides in the cytoplasm. An accessory protein needed during the final step in the assembly of 30S ribosomal subunit, possibly for assembly of the head region. Essential for efficient processing of 16S rRNA. May be needed both before and after RbfA during the maturation of 16S rRNA. It has affinity for free ribosomal 30S subunits but not for 70S ribosomes. This is Ribosome maturation factor RimM from Shewanella sp. (strain ANA-3).